We begin with the raw amino-acid sequence, 445 residues long: Sporulation protein YkvU (445 aa).

Transmembrane regions (helical) follow at residues 7–29, 39–61, 82–104, 109–131, 144–166, 172–194, 237–259, 269–291, 312–334, 349–371, 376–395, and 400–422; these read GIIL…NMIL, GLYM…ELPI, AFRM…LPFI, TYHP…TSIA, IAIA…FQWY, MAVL…YLYS, VNAI…GTAA, VAVT…MIPS, IFIT…GPLT, LLWP…IGMG, AFYH…YVLG, and LQML…LHYA.

It localises to the forespore membrane. The polypeptide is Sporulation protein YkvU (ykvU) (Bacillus subtilis (strain 168)).